The sequence spans 306 residues: Cilia- and flagella-associated protein 73 (306 aa).

Coiled coils occupy residues 49–139 and 197–231; these read LQAQ…QRLE and QSEK…WESK.

This sequence belongs to the CFAP73 family.

The protein resides in the cytoplasm. It localises to the cytoskeleton. The protein localises to the cilium axoneme. Functionally, may play a role in ciliary/flagellar motility by regulating the assembly and the activity of axonemal inner dynein arm. This Mus musculus (Mouse) protein is Cilia- and flagella-associated protein 73.